The sequence spans 356 residues: Alpha-N-acetylneuraminide alpha-2,8-sialyltransferase (356 aa).

Residues 1-29 (MSPCGRARRQTSRGAMAVLAWKFPRTRLP) are Cytoplasmic-facing. Residues 30 to 48 (MGASALCVVVLCWLYIFPV) form a helical; Signal-anchor for type II membrane protein membrane-spanning segment. The Lumenal portion of the chain corresponds to 49-356 (YRLPNEKEIV…CEDTSLQPTS (308 aa)). N-linked (GlcNAc...) asparagine glycosylation is found at Asn-71 and Asn-119. Intrachain disulfides connect Cys-138–Cys-287 and Cys-152–Cys-347. The CMP-N-acetyl-beta-neuraminate site is built by Asn-143 and Asn-166. N-linked (GlcNAc...) asparagine glycosylation is found at Asn-214 and Asn-245. CMP-N-acetyl-beta-neuraminate-binding residues include Ser-274, Thr-275, Gly-276, Trp-296, and His-310. His-322 acts as the Proton donor/acceptor in catalysis.

It belongs to the glycosyltransferase 29 family. In terms of tissue distribution, strongly expressed in melanoma cell lines, adult and fetal brain and to a lesser extent in adult and fetal lung.

The protein localises to the golgi apparatus membrane. It catalyses the reaction an N-acetyl-alpha-neuraminyl-(2-&gt;3)-beta-D-galactosyl derivative + CMP-N-acetyl-beta-neuraminate = an N-acetyl-alpha-neuraminyl-(2-&gt;8)-N-acetyl-alpha-neuraminyl-(2-&gt;3)-beta-D-galactosyl derivative + CMP + H(+). It carries out the reaction a ganglioside GM3 (d18:1(4E)) + CMP-N-acetyl-beta-neuraminate = a ganglioside GD3 (d18:1(4E)) + CMP + H(+). The enzyme catalyses a ganglioside GD3 (d18:1(4E)) + CMP-N-acetyl-beta-neuraminate = a ganglioside GT3 (d18:1(4E)) + CMP + H(+). The catalysed reaction is a ganglioside GD1a (d18:1(4E)) + CMP-N-acetyl-beta-neuraminate = a ganglioside GT1a (d18:1(4E)) + CMP + H(+). It catalyses the reaction a ganglioside GT1b (d18:1(4E)) + CMP-N-acetyl-beta-neuraminate = a ganglioside GQ1b (d18:1(4E)) + CMP + H(+). It carries out the reaction a ganglioside GM1b (d18:1(4E)) + CMP-N-acetyl-beta-neuraminate = a ganglioside GD1c (d18:1(4E)) + CMP + H(+). The enzyme catalyses a ganglioside GD3 + CMP-N-acetyl-beta-neuraminate = a ganglioside GT3 + CMP + H(+). The catalysed reaction is [alpha-N-acetylneuraminyl-(2-&gt;8)](n)-alpha-N-acetylneuraminyl-(2-&gt;8)-alpha-N-acetylneuraminyl-(2-&gt;3)-beta-D-galactosyl-(1-&gt;4)-beta-D-glucosyl-(1&lt;-&gt;1)-ceramide + CMP-N-acetyl-beta-neuraminate = [alpha-N-acetylneuraminyl-(2-&gt;8)](n+1)-alpha-N-acetylneuraminyl-(2-&gt;8)-alpha-N-acetylneuraminyl-(2-&gt;3)-beta-D-galactosyl-(1-&gt;4)-beta-D-glucosyl-(1&lt;-&gt;1)-ceramide + CMP + H(+). It participates in protein modification; protein glycosylation. Its pathway is lipid metabolism; sphingolipid metabolism. Catalyzes the addition of sialic acid in alpha 2,8-linkage to the sialic acid moiety of the ganglioside GM3 to form ganglioside GD3; gangliosides are a subfamily of complex glycosphingolipds that contain one or more residues of sialic acid. Can catalyze the addition of a second alpha-2,8-sialic acid to GD3 to form GT3. Can use GM1b, GD1a and GT1b as acceptor substrates to synthesize GD1c, GT1a and GQ1b respectively. Can synthesize unusual tetra- and pentasialylated lactosylceramide derivatives identified as GQ3 (II3Neu5Ac4-Gg2Cer) and GP3 (II3Neu5Ac5-Gg2Cer) in breast cancer cells. This is Alpha-N-acetylneuraminide alpha-2,8-sialyltransferase from Homo sapiens (Human).